Reading from the N-terminus, the 686-residue chain is ATP-dependent zinc metalloprotease FtsH 2 (686 aa).

Topologically, residues Met1–Asn11 are cytoplasmic. A helical membrane pass occupies residues Phe12–Met32. Over Met33 to Phe178 the chain is Extracellular. A helical transmembrane segment spans residues Gly179–Ile199. The Cytoplasmic segment spans residues Tyr200–Lys686. Gly272 to Thr279 contacts ATP. His493 contributes to the Zn(2+) binding site. Glu494 is an active-site residue. Residues His497 and Asp569 each contribute to the Zn(2+) site.

This sequence in the central section; belongs to the AAA ATPase family. The protein in the C-terminal section; belongs to the peptidase M41 family. In terms of assembly, homohexamer. The cofactor is Zn(2+).

It is found in the cell membrane. Acts as a processive, ATP-dependent zinc metallopeptidase for both cytoplasmic and membrane proteins. Plays a role in the quality control of integral membrane proteins. The chain is ATP-dependent zinc metalloprotease FtsH 2 from Phytoplasma mali (strain AT).